The chain runs to 196 residues: Superantigen-like protein 11 (196 aa).

Residues 65 to 167 are sialyl Lewis X-binding; sequence LDVFVVREGS…RVTMKNGDFY (103 aa).

This sequence belongs to the staphylococcal/streptococcal toxin family. Homodimer (via its C-terminal domain). Interacts with host FCAR and SELPLG (via sialyl Lewis X).

It is found in the secreted. In terms of biological role, secreted protein that plays a role in the inhibition of host immune system. Targets myeloid cells such as monocytes or granulocytes through binding with sialyllactosamine-containing glycoproteins. Prevents initial rolling of neutrophils toward the site of infection by interacting with host SELPLG. Disrupts neutrophil motility by induction of cell adhesion via interacting with glycans but independently of SELPLG. The polypeptide is Superantigen-like protein 11 (Staphylococcus aureus).